Consider the following 711-residue polypeptide: Polyribonucleotide nucleotidyltransferase (711 aa).

Residues Asp490 and Asp496 each contribute to the Mg(2+) site. One can recognise a KH domain in the interval Pro557–Ile619. The S1 motif domain maps to Gly629 to Lys699.

The protein belongs to the polyribonucleotide nucleotidyltransferase family. The cofactor is Mg(2+).

It is found in the cytoplasm. It carries out the reaction RNA(n+1) + phosphate = RNA(n) + a ribonucleoside 5'-diphosphate. Functionally, involved in mRNA degradation. Catalyzes the phosphorolysis of single-stranded polyribonucleotides processively in the 3'- to 5'-direction. This is Polyribonucleotide nucleotidyltransferase from Phocaeicola vulgatus (strain ATCC 8482 / DSM 1447 / JCM 5826 / CCUG 4940 / NBRC 14291 / NCTC 11154) (Bacteroides vulgatus).